A 92-amino-acid polypeptide reads, in one-letter code: MAKGQSLQDPFLNALRRERVPVSIYLVNGIKLQGQVESFDQFVILLKNTVSQMVYKHAISTVVPSRPFNVSNHQATNAQAGYNAQHDDGDEK.

In terms of domain architecture, Sm spans aspartate 9–phenylalanine 68. Residues histidine 73–tyrosine 82 are compositionally biased toward polar residues. Positions histidine 73–lysine 92 are disordered.

This sequence belongs to the Hfq family. Homohexamer.

Its function is as follows. RNA chaperone that binds small regulatory RNA (sRNAs) and mRNAs to facilitate mRNA translational regulation in response to envelope stress, environmental stress and changes in metabolite concentrations. Also binds with high specificity to tRNAs. This Shewanella pealeana (strain ATCC 700345 / ANG-SQ1) protein is RNA-binding protein Hfq.